Reading from the N-terminus, the 239-residue chain is Large ribosomal subunit protein uL3 (239 aa).

Disordered stretches follow at residues 140 to 166 and 211 to 239; these read SHRSIGSTGGRQDPGKTWKNKKMPGHM and PLPKEAPKPGKFKVAGEQAAEAPAVQEGA. Residue glutamine 151 is modified to N5-methylglutamine.

The protein belongs to the universal ribosomal protein uL3 family. Part of the 50S ribosomal subunit. Forms a cluster with proteins L14 and L19. Post-translationally, methylated by PrmB.

Functionally, one of the primary rRNA binding proteins, it binds directly near the 3'-end of the 23S rRNA, where it nucleates assembly of the 50S subunit. In Bradyrhizobium sp. (strain BTAi1 / ATCC BAA-1182), this protein is Large ribosomal subunit protein uL3.